A 434-amino-acid chain; its full sequence is Trigger factor (434 aa).

Positions 160–245 (GDKVKMNFVG…LTEVQAAQLP (86 aa)) constitute a PPIase FKBP-type domain.

Belongs to the FKBP-type PPIase family. Tig subfamily.

Its subcellular location is the cytoplasm. It carries out the reaction [protein]-peptidylproline (omega=180) = [protein]-peptidylproline (omega=0). Its function is as follows. Involved in protein export. Acts as a chaperone by maintaining the newly synthesized protein in an open conformation. Functions as a peptidyl-prolyl cis-trans isomerase. In Shewanella denitrificans (strain OS217 / ATCC BAA-1090 / DSM 15013), this protein is Trigger factor.